The primary structure comprises 261 residues: Adenosylcobinamide-GDP ribazoletransferase (261 aa).

The next 5 membrane-spanning stretches (helical) occupy residues 12 to 32, 46 to 66, 67 to 87, 120 to 140, and 199 to 219; these read NLFF…WVVI, LVGL…QLIL, PASI…GAFH, GALS…ELAL, and IFVL…TLWL.

This sequence belongs to the CobS family. It depends on Mg(2+) as a cofactor.

It localises to the cell inner membrane. It catalyses the reaction alpha-ribazole + adenosylcob(III)inamide-GDP = adenosylcob(III)alamin + GMP + H(+). The enzyme catalyses alpha-ribazole 5'-phosphate + adenosylcob(III)inamide-GDP = adenosylcob(III)alamin 5'-phosphate + GMP + H(+). It functions in the pathway cofactor biosynthesis; adenosylcobalamin biosynthesis; adenosylcobalamin from cob(II)yrinate a,c-diamide: step 7/7. Its function is as follows. Joins adenosylcobinamide-GDP and alpha-ribazole to generate adenosylcobalamin (Ado-cobalamin). Also synthesizes adenosylcobalamin 5'-phosphate from adenosylcobinamide-GDP and alpha-ribazole 5'-phosphate. This Shewanella frigidimarina (strain NCIMB 400) protein is Adenosylcobinamide-GDP ribazoletransferase.